The following is a 171-amino-acid chain: Translationally-controlled tumor protein homolog (171 aa).

Positions 1–171 (MIIYRDCISQ…FKDGLEMEKC (171 aa)) constitute a TCTP domain.

The protein belongs to the TCTP family. Expressed by the venom gland.

The protein resides in the secreted. Venom protein that causes edema, enhances vascular permeability and is likely related to the inflammatory activity of the venom. This chain is Translationally-controlled tumor protein homolog, found in Micrurus fulvius (Eastern coral snake).